A 312-amino-acid chain; its full sequence is Secreted RxLR effector protein 14 (312 aa).

The N-terminal stretch at Met1–Ala20 is a signal peptide. The short motif at Arg46–Arg61 is the RxLR-dEER element.

This sequence belongs to the RxLR effector family.

The protein localises to the secreted. It is found in the host nucleus. Secreted effector that completely suppresses the host cell death induced by cell death-inducing proteins. In Plasmopara viticola (Downy mildew of grapevine), this protein is Secreted RxLR effector protein 14.